The chain runs to 194 residues: Peptidyl-tRNA hydrolase (194 aa).

Position 17 (Tyr-17) interacts with tRNA. The active-site Proton acceptor is His-22. Tyr-68, Asn-70, and Asn-116 together coordinate tRNA.

The protein belongs to the PTH family. In terms of assembly, monomer.

It is found in the cytoplasm. The enzyme catalyses an N-acyl-L-alpha-aminoacyl-tRNA + H2O = an N-acyl-L-amino acid + a tRNA + H(+). Its function is as follows. Hydrolyzes ribosome-free peptidyl-tRNAs (with 1 or more amino acids incorporated), which drop off the ribosome during protein synthesis, or as a result of ribosome stalling. Catalyzes the release of premature peptidyl moieties from peptidyl-tRNA molecules trapped in stalled 50S ribosomal subunits, and thus maintains levels of free tRNAs and 50S ribosomes. The sequence is that of Peptidyl-tRNA hydrolase from Pseudomonas putida (strain GB-1).